A 68-amino-acid chain; its full sequence is Protein SlyX homolog (68 aa).

This sequence belongs to the SlyX family.

This is Protein SlyX homolog from Ectopseudomonas mendocina (strain ymp) (Pseudomonas mendocina).